We begin with the raw amino-acid sequence, 1187 residues long: MEPGVSIESGSAIRVAVLPVGGPISPARLRDYAALVARHARVDLASLRPYYSEHQKSPFAHQPWGGGCLRLKFVLGGCVPSPWEDFQSSRKVLAVVGICHLPSSPDLGRVAADFVDAARSYPSALASRCFAFCPTDAQLVQKKRDNIIMFPPSDQQSLELHMLTMIQDLSASLLMEFEKWVLRAESTGTILKTPLDSQSSLGSEEVIKAKKRRLGRAQKIIGDYCLLAGSPADANAHYATAIELARLTGDVFWHAGALEGSVCALVVDRMAESDPVLEDEVKFRYYTIIQLYRRATLQDNAQRVSPVSFELEAALKLARYLCRRQCAKEVSDLLMGAADGAKALIDASDRLILYIEIARLFGTLGYKRKAAFFSRQVAQLYLQQDNAYAAMSAMQVLTTTTTAYHVQSRKTSKMDHGLLKSVVSLFESQWSTLQMVVLREILMSSIRAADPLSSWSAAARLLRSFYPLITPAGQSGLASSLSNSADKLPSGTRCADPCLPFIRLHSFPLHPSQREIVKRNPNKKEWWTGGGPSGPFIYTPFTKGGTSGTSKQEVNWIVGEPVQVMVELANPCSFDLIVESIYLSVHSGNFDAFPVSVNLPPNTSKLVLLSGIPTQVGQVSIPGCIVHCFGVITEHLFKEVDCLLLGAAQGLVLSDPFRCCGSSKFKSVNFPSISVVPPLPLLVANVVGGDGSILLYEGEIRDVLITLTNAGTVPVEEANVALSGKNQDSVISIAHSTWKSALPIKPGGEVTFAVTLRAWHLSPTDLEADGSRSPANSRRIAREGSNPFLDIHYAGPSGNSESNDVSLPPGRRLVVPLNICVVQGMRLVRARLLSMELPARFTDAHLRSVSSKDNLSNGSDAIRNDISLLKIDPYKGSWDLRLLELELFNPTDVVFDVDVSVHLDGTSVEQKILPEDKTASSACHKTRIDRDYSARVLIPLEHFKLPVLDTSFFVKENGSDEPLGSRAATLAEKNAKAELNASINNLISKIKVKWHSGRNSSGELNIKDAIQTALQASIMDILLPDPLTFSFRHAKDGTTAKTDSSKEPGDGSSRSADESVLRCKDPIFANEMTHMEVQIRNNTKETIRMNLSISCKDVAGENCFDENSATVLWAGVLSDIYLEVQPLQEVVHPFSIYFLVPGDYSLQAASVIIDATDVLRARAKAESPDEPILCRGSPFHIHVVGTA.

A disordered region spans residues 1037-1059 (GTTAKTDSSKEPGDGSSRSADES).

This sequence belongs to the TRS120 family. Part of the multisubunit TRAPP (transport protein particle) II complex composed of BET3, BET5, TRS20, TRS23, TRS31, TRS33, TRS65, TRS85, TRS120 and TRS130.

The protein resides in the golgi apparatus. The protein localises to the trans-Golgi network. Its subcellular location is the early endosome. Functionally, specific subunit of the TRAPP II complex, a highly conserved vesicle tethering complex that is required for the proper transport of proteins in post-Golgi trafficking pathways to the growing cell plate in mitotic active cells. The polypeptide is Trafficking protein particle complex II-specific subunit 120 homolog (Oryza sativa subsp. japonica (Rice)).